The primary structure comprises 401 residues: Probable cysteine desulfurase (401 aa).

The residue at position 223 (K223) is an N6-(pyridoxal phosphate)lysine.

The protein belongs to the class-V pyridoxal-phosphate-dependent aminotransferase family. Csd subfamily. The cofactor is pyridoxal 5'-phosphate.

It carries out the reaction (sulfur carrier)-H + L-cysteine = (sulfur carrier)-SH + L-alanine. Its function is as follows. Catalyzes the removal of elemental sulfur and selenium atoms from L-cysteine, L-cystine, L-selenocysteine, and L-selenocystine to produce L-alanine. This is Probable cysteine desulfurase (csdA) from Pseudomonas putida (strain ATCC 47054 / DSM 6125 / CFBP 8728 / NCIMB 11950 / KT2440).